We begin with the raw amino-acid sequence, 62 residues long: UPF0434 protein Tola_2233 (62 aa).

It belongs to the UPF0434 family.

This chain is UPF0434 protein Tola_2233, found in Tolumonas auensis (strain DSM 9187 / NBRC 110442 / TA 4).